Consider the following 141-residue polypeptide: Protein GAT3 (141 aa).

The GATA-type zinc-finger motif lies at 72–98 (CPQCAVIKTSPQWREGPDGEVTLCNAC).

This is Protein GAT3 (GAT3) from Saccharomyces cerevisiae (strain ATCC 204508 / S288c) (Baker's yeast).